Here is a 60-residue protein sequence, read N- to C-terminus: Single-pass membrane and coiled-coil domain-containing protein 4 homolog (60 aa).

The segment at 1 to 23 is disordered; the sequence is MRKLRGGQTKETRKQRQERKEEN. Over residues 8-23 the composition is skewed to basic and acidic residues; the sequence is QTKETRKQRQERKEEN. Residues 8-33 adopt a coiled-coil conformation; the sequence is QTKETRKQRQERKEENLKIQQQMKTI. Residues 31–51 form a helical membrane-spanning segment; the sequence is KTIVLPTIGVIFLCIVVYVFL.

This sequence belongs to the SMCO4 family.

The protein localises to the membrane. The sequence is that of Single-pass membrane and coiled-coil domain-containing protein 4 homolog from Anopheles gambiae (African malaria mosquito).